A 335-amino-acid polypeptide reads, in one-letter code: uncharacterized protein (335 aa).

Helical transmembrane passes span 104 to 124 (FKKV…MGLL), 128 to 148 (LLQG…LSLF), 280 to 300 (LAFG…TMIG), and 310 to 330 (TINL…GIFV).

It is found in the cell membrane. This is an uncharacterized protein from Methanocaldococcus jannaschii (strain ATCC 43067 / DSM 2661 / JAL-1 / JCM 10045 / NBRC 100440) (Methanococcus jannaschii).